Here is a 357-residue protein sequence, read N- to C-terminus: Membrane-bound lytic murein transglycosylase C (357 aa).

The N-terminal stretch at M1 to S16 is a signal peptide. The N-palmitoyl cysteine moiety is linked to residue C17. Residue C17 is the site of S-diacylglycerol cysteine attachment.

Belongs to the transglycosylase Slt family.

It is found in the cell outer membrane. The catalysed reaction is Exolytic cleavage of the (1-&gt;4)-beta-glycosidic linkage between N-acetylmuramic acid (MurNAc) and N-acetylglucosamine (GlcNAc) residues in peptidoglycan, from either the reducing or the non-reducing ends of the peptidoglycan chains, with concomitant formation of a 1,6-anhydrobond in the MurNAc residue.. Its function is as follows. Murein-degrading enzyme. May play a role in recycling of muropeptides during cell elongation and/or cell division. The sequence is that of Membrane-bound lytic murein transglycosylase C from Sodalis glossinidius (strain morsitans).